Here is a 1025-residue protein sequence, read N- to C-terminus: Retrovirus-related Pol polyprotein from type-1 retrotransposable element R2 (1025 aa).

Residues 1–11 are compositionally biased toward polar residues; that stretch reads NQIKKSNTSTG. The segment at 1 to 38 is disordered; that stretch reads NQIKKSNTSTGARIPKAMTNPADNFAGGQWKPPGRRSA. A C2H2-type zinc finger spans residues 46–69; the sequence is FVCEHCLRAFTTNTGRGLHIKRAH. The segment covering 146 to 158 has biased composition (basic and acidic residues); sequence NRARETELTRLET. A disordered region spans residues 146-172; that stretch reads NRARETELTRLETADEDPASQEQDNPN. The Reverse transcriptase domain occupies 358-635; sequence MIMYHGQCPR…DQWKYLGVVY (278 aa). The nucleic acid-binding endonuclease stretch occupies residues 755–1025; sequence SLLGGDWVAE…YRTERRRTAN (271 aa).

The catalysed reaction is DNA(n) + a 2'-deoxyribonucleoside 5'-triphosphate = DNA(n+1) + diphosphate. The protein is Retrovirus-related Pol polyprotein from type-1 retrotransposable element R2 of Nasonia vitripennis (Parasitic wasp).